The chain runs to 156 residues: Small ribosomal subunit protein uS7 (156 aa).

This sequence belongs to the universal ribosomal protein uS7 family. As to quaternary structure, part of the 30S ribosomal subunit. Contacts proteins S9 and S11.

Its function is as follows. One of the primary rRNA binding proteins, it binds directly to 16S rRNA where it nucleates assembly of the head domain of the 30S subunit. Is located at the subunit interface close to the decoding center, probably blocks exit of the E-site tRNA. The protein is Small ribosomal subunit protein uS7 of Actinobacillus pleuropneumoniae serotype 5b (strain L20).